Here is a 123-residue protein sequence, read N- to C-terminus: Large ribosomal subunit protein uL18 (123 aa).

This sequence belongs to the universal ribosomal protein uL18 family. In terms of assembly, part of the 50S ribosomal subunit; part of the 5S rRNA/L5/L18/L25 subcomplex. Contacts the 5S and 23S rRNAs.

Functionally, this is one of the proteins that bind and probably mediate the attachment of the 5S RNA into the large ribosomal subunit, where it forms part of the central protuberance. The protein is Large ribosomal subunit protein uL18 of Chlamydia pneumoniae (Chlamydophila pneumoniae).